We begin with the raw amino-acid sequence, 781 residues long: Serine/threonine-protein kinase PLK4 (781 aa).

In terms of domain architecture, Protein kinase spans 14-268 (YEVQHLLGKG…LEQVLRHPFM (255 aa)). Residues 20 to 28 (LGKGGFACV) and lysine 43 contribute to the ATP site. Aspartate 139 acts as the Proton acceptor in catalysis. The Cryptic POLO box 1 (CPB1) domain occupies 397–514 (TEHISVPPLN…ARFVGLVKSK (118 aa)). Residues 463-486 (QPDPGRGLPIQEQTSETHSSGTDN) are disordered. The segment covering 473 to 486 (QEQTSETHSSGTDN) has biased composition (polar residues). The Cryptic POLO box 2 (CPB2) domain maps to 515 to 618 (TPKVTYFSAL…GRRPVVEVLP (104 aa)). The POLO box domain maps to 672–751 (PIKRLNVPGV…LPQVQMKLRC (80 aa)).

It belongs to the protein kinase superfamily. Ser/Thr protein kinase family. CDC5/Polo subfamily. Homodimer. Post-translationally, ubiquitinated by the SCF(Slimb) ubiquitin ligase complex; leading to its degradation by the proteasome during interphase and regulating centriole number and ensuring the block to centriole reduplication.

The protein resides in the cytoplasm. It is found in the cytoskeleton. The protein localises to the microtubule organizing center. It localises to the centrosome. Its subcellular location is the centriole. It catalyses the reaction L-seryl-[protein] + ATP = O-phospho-L-seryl-[protein] + ADP + H(+). The catalysed reaction is L-threonyl-[protein] + ATP = O-phospho-L-threonyl-[protein] + ADP + H(+). Functionally, serine/threonine-protein kinase that plays a central role in centriole duplication. Able to trigger procentriole formation on the surface of the mother centriole cylinder, using mother centriole as a platform, leading to the recruitment of centriole biogenesis proteins such as sas-6. When overexpressed, it is able to induce centrosome amplification through the simultaneous generation of multiple procentrioles adjoining each parental centriole during S phase. Centrosome amplification following overexpression can initiate tumorigenesis, highlighting the importance of centrosome regulation in cancers. The protein is Serine/threonine-protein kinase PLK4 (SAK) of Drosophila virilis (Fruit fly).